We begin with the raw amino-acid sequence, 505 residues long: AMP phosphorylase (505 aa).

AMP contacts are provided by residues G169, 195-200 (SRAITG), and T204. D257 (proton donor) is an active-site residue. Residues S265 and K289 each contribute to the AMP site.

It belongs to the thymidine/pyrimidine-nucleoside phosphorylase family. Type 2 subfamily.

The enzyme catalyses AMP + phosphate = alpha-D-ribose 1,5-bisphosphate + adenine. The catalysed reaction is CMP + phosphate = cytosine + alpha-D-ribose 1,5-bisphosphate. It catalyses the reaction UMP + phosphate = alpha-D-ribose 1,5-bisphosphate + uracil. In terms of biological role, catalyzes the conversion of AMP and phosphate to adenine and ribose 1,5-bisphosphate (R15P). Exhibits phosphorylase activity toward CMP and UMP in addition to AMP. Functions in an archaeal AMP degradation pathway, together with R15P isomerase and RubisCO. This is AMP phosphorylase from Methanocorpusculum labreanum (strain ATCC 43576 / DSM 4855 / Z).